Reading from the N-terminus, the 479-residue chain is Sulfate adenylyltransferase subunit 1 (479 aa).

A tr-type G domain is found at 25-239 (KSLLRFLTCG…EVLETVDIQR (215 aa)). A G1 region spans residues 34–41 (GSVDDGKS). GTP is bound at residue 34 to 41 (GSVDDGKS). The G2 stretch occupies residues 92-96 (GITID). Residues 113–116 (DTPG) are G3. Residues 113 to 117 (DTPGH) and 168 to 171 (NKMD) contribute to the GTP site. Residues 168-171 (NKMD) form a G4 region. The tract at residues 206 to 208 (SAL) is G5.

Belongs to the TRAFAC class translation factor GTPase superfamily. Classic translation factor GTPase family. CysN/NodQ subfamily. Heterodimer composed of CysD, the smaller subunit, and CysN.

The enzyme catalyses sulfate + ATP + H(+) = adenosine 5'-phosphosulfate + diphosphate. The protein operates within sulfur metabolism; hydrogen sulfide biosynthesis; sulfite from sulfate: step 1/3. Functionally, with CysD forms the ATP sulfurylase (ATPS) that catalyzes the adenylation of sulfate producing adenosine 5'-phosphosulfate (APS) and diphosphate, the first enzymatic step in sulfur assimilation pathway. APS synthesis involves the formation of a high-energy phosphoric-sulfuric acid anhydride bond driven by GTP hydrolysis by CysN coupled to ATP hydrolysis by CysD. The chain is Sulfate adenylyltransferase subunit 1 from Salmonella paratyphi B (strain ATCC BAA-1250 / SPB7).